The following is a 183-amino-acid chain: MSVVVGGVEYSLNNWAKYEIKRRAAELESVNYYPHCEYVMPEDIVVSILGSKPNCPFLEALKRFHDFLKKRRIIFKGEYLVIPWMGAQDVADMIHHVENRINLDHLEDLAHMLKLITYHRSFDTCINQSFEHLYAFKFPDANIETHELKHIRQLEKKMYGYILRLEKLQTVLTFYIEFLLKQV.

Belongs to the asfivirus S183L family.

This is an uncharacterized protein from Ornithodoros (relapsing fever ticks).